Consider the following 394-residue polypeptide: Actin-related protein 2-A (394 aa).

Residues 160-162, 214-218, and 305-310 contribute to the ATP site; these read GDG, RMMKE, and GGSTMY.

This sequence belongs to the actin family. ARP2 subfamily. Component of the Arp2/3 complex composed of actr2/arp2, actr3/arp3, arpc1b, arpc2, arpc3, arpc4 and arpc5.

The protein localises to the cytoplasm. It is found in the cytoskeleton. The protein resides in the cell projection. Its subcellular location is the nucleus. ATP-binding component of the Arp2/3 complex, a multiprotein complex that mediates actin polymerization upon stimulation by nucleation-promoting factor (NPF). The Arp2/3 complex mediates the formation of branched actin networks in the cytoplasm, providing the force for cell motility. Seems to contact the pointed end of the daughter actin filament. In addition to its role in the cytoplasmic cytoskeleton, the Arp2/3 complex also promotes actin polymerization in the nucleus, thereby regulating gene transcription and repair of damaged DNA. The Arp2/3 complex promotes homologous recombination (HR) repair in response to DNA damage by promoting nuclear actin polymerization, leading to drive motility of double-strand breaks (DSBs). This is Actin-related protein 2-A (actr2a) from Danio rerio (Zebrafish).